A 592-amino-acid chain; its full sequence is Aspartate--tRNA(Asp/Asn) ligase (592 aa).

E177 contributes to the L-aspartate binding site. The segment at 201–204 (QLFK) is aspartate. Residue R223 coordinates L-aspartate. ATP-binding positions include 223-225 (RDE) and Q232. H451 is an L-aspartate binding site. E485 is a binding site for ATP. R492 lines the L-aspartate pocket. 537 to 540 (GLDR) serves as a coordination point for ATP.

This sequence belongs to the class-II aminoacyl-tRNA synthetase family. Type 1 subfamily. Homodimer.

Its subcellular location is the cytoplasm. The enzyme catalyses tRNA(Asx) + L-aspartate + ATP = L-aspartyl-tRNA(Asx) + AMP + diphosphate. In terms of biological role, aspartyl-tRNA synthetase with relaxed tRNA specificity since it is able to aspartylate not only its cognate tRNA(Asp) but also tRNA(Asn). Reaction proceeds in two steps: L-aspartate is first activated by ATP to form Asp-AMP and then transferred to the acceptor end of tRNA(Asp/Asn). This is Aspartate--tRNA(Asp/Asn) ligase from Bacillus subtilis (strain 168).